We begin with the raw amino-acid sequence, 226 residues long: Protein AF-9 homolog (226 aa).

One can recognise a YEATS domain in the interval 8-169 (RIKTLSVSRP…EEFFKILMSR (162 aa)). A coiled-coil region spans residues 187–224 (QLEQEEIDRIEIGIEKVDKEIDELKQKLENLVKQEAIN).

Component of the SWR1 chromatin-remodeling complex composed of at least ACT1, ARP4, RVB1, RVB2, ARP6, YAF9, VPS71, VPS72, SWC3, SWC4, SWC5, SWC7 and SWR1, and perhaps BDF1. Component of the NuA4 histone acetyltransferase complex composed of at least ACT1, ARP4, YAF9, VID21, SWC4, EAF3, EAF5, EAF6, EAF7, EPL1, ESA1, TRA1 and YNG2. Interacts with SWC4.

Its subcellular location is the cytoplasm. The protein localises to the nucleus. Its function is as follows. Component of the SWR1 complex which mediates the ATP-dependent exchange of histone H2A for the H2A variant HZT1 leading to transcriptional regulation of selected genes by chromatin remodeling. Component of the NuA4 histone acetyltransferase complex which is involved in transcriptional activation of selected genes principally by acetylation of nucleosomal histones H4 and H2A. The NuA4 complex is also involved in DNA repair. Yaf9 may also be required for viability in conditions in which the structural integrity of the spindle is compromised. The protein is Protein AF-9 homolog (YAF9) of Saccharomyces cerevisiae (strain ATCC 204508 / S288c) (Baker's yeast).